We begin with the raw amino-acid sequence, 119 residues long: uncharacterized protein (119 aa).

This is an uncharacterized protein from Ureaplasma parvum serovar 3 (strain ATCC 700970).